The chain runs to 342 residues: Nucleoid-associated protein Sbal223_1817 (342 aa).

The protein belongs to the YejK family.

The protein resides in the cytoplasm. It is found in the nucleoid. In Shewanella baltica (strain OS223), this protein is Nucleoid-associated protein Sbal223_1817.